The sequence spans 252 residues: Flagellar brake protein YcgR (252 aa).

The PilZ domain occupies 123-238 (QRREFYRVPT…TLATVQKYIT (116 aa)).

This sequence belongs to the YcgR family. As to quaternary structure, monomer. Interacts with the flagellar basal bodies.

It is found in the bacterial flagellum basal body. Functionally, acts as a flagellar brake, regulating swimming and swarming in a bis-(3'-5') cyclic diguanylic acid (c-di-GMP)-dependent manner. Binds 1 c-di-GMP dimer per subunit. Increasing levels of c-di-GMP lead to decreased motility. In Janthinobacterium sp. (strain Marseille) (Minibacterium massiliensis), this protein is Flagellar brake protein YcgR.